The following is a 475-amino-acid chain: Ribulose bisphosphate carboxylase large chain (475 aa).

Positions 123 and 173 each coordinate substrate. The Proton acceptor role is filled by Lys175. Position 177 (Lys177) interacts with substrate. Positions 201, 203, and 204 each coordinate Mg(2+). Lys201 is subject to N6-carboxylysine. His294 (proton acceptor) is an active-site residue. The substrate site is built by Arg295, His327, and Ser379.

This sequence belongs to the RuBisCO large chain family. Type I subfamily. Heterohexadecamer of 8 large chains and 8 small chains. Mg(2+) is required as a cofactor.

It localises to the plastid. The protein localises to the cyanelle. The enzyme catalyses 2 (2R)-3-phosphoglycerate + 2 H(+) = D-ribulose 1,5-bisphosphate + CO2 + H2O. It carries out the reaction D-ribulose 1,5-bisphosphate + O2 = 2-phosphoglycolate + (2R)-3-phosphoglycerate + 2 H(+). RuBisCO catalyzes two reactions: the carboxylation of D-ribulose 1,5-bisphosphate, the primary event in carbon dioxide fixation, as well as the oxidative fragmentation of the pentose substrate in the photorespiration process. Both reactions occur simultaneously and in competition at the same active site. The sequence is that of Ribulose bisphosphate carboxylase large chain from Cyanophora paradoxa.